A 155-amino-acid polypeptide reads, in one-letter code: Endoribonuclease YbeY (155 aa).

His-110, His-114, and His-120 together coordinate Zn(2+).

This sequence belongs to the endoribonuclease YbeY family. The cofactor is Zn(2+).

The protein resides in the cytoplasm. Its function is as follows. Single strand-specific metallo-endoribonuclease involved in late-stage 70S ribosome quality control and in maturation of the 3' terminus of the 16S rRNA. This Deinococcus geothermalis (strain DSM 11300 / CIP 105573 / AG-3a) protein is Endoribonuclease YbeY.